Consider the following 1172-residue polypeptide: Lysylphosphatidylglycerol biosynthesis bifunctional protein LysX (1172 aa).

A disordered region spans residues 1-34 (MGLHLTVPGLRRDGRGVQSNSHDTSSKTTADISR). The interval 1–663 (MGLHLTVPGL…LLHHDGSAPD (663 aa)) is phosphatidylglycerol lysyltransferase. Residues 17-31 (VQSNSHDTSSKTTAD) show a composition bias toward polar residues. Transmembrane regions (helical) follow at residues 80-100 (VPAA…LASV), 122-142 (FPDT…ALTA), 146-166 (IAWL…AAEI), 177-197 (FGEN…VLGY), 214-234 (AVWL…VELF), 272-292 (AIFG…LFLS), and 612-632 (VIPR…LPFS). The lysine--tRNA ligase stretch occupies residues 664 to 1172 (VSGLRQVGLT…TLPFPLAKPH (509 aa)). A DNA-binding region (OB) is located at residues 726-804 (VSVSGRIMRI…SLIVSGWRLI (79 aa)). D1084 and E1091 together coordinate Mg(2+).

In the N-terminal section; belongs to the LPG synthetase family. It in the C-terminal section; belongs to the class-II aminoacyl-tRNA synthetase family. The cofactor is Mg(2+).

It localises to the cell membrane. The enzyme catalyses tRNA(Lys) + L-lysine + ATP = L-lysyl-tRNA(Lys) + AMP + diphosphate. It catalyses the reaction L-lysyl-tRNA(Lys) + a 1,2-diacyl-sn-glycero-3-phospho-(1'-sn-glycerol) = a 1,2-diacyl-sn-glycero-3-phospho-1'-(3'-O-L-lysyl)-sn-glycerol + tRNA(Lys). Its function is as follows. Catalyzes the production of L-lysyl-tRNA(Lys)transfer and the transfer of a lysyl group from L-lysyl-tRNA(Lys) to membrane-bound phosphatidylglycerol (PG), which produces lysylphosphatidylglycerol (LPG), one of the components of the bacterial membrane with a positive net charge. LPG synthesis contributes to the resistance to cationic antimicrobial peptides (CAMPs) and likely protects M.tuberculosis against the CAMPs produced by competiting microorganisms (bacteriocins). In fact, the modification of anionic phosphatidylglycerol with positively charged L-lysine results in repulsion of the peptides. This Mycobacterium bovis (strain ATCC BAA-935 / AF2122/97) protein is Lysylphosphatidylglycerol biosynthesis bifunctional protein LysX (lysX).